An 82-amino-acid polypeptide reads, in one-letter code: Omega-ctenitoxin-Pn1a (82 aa).

Positions 1–21 (MWLKIQVFLLAITLITLGIQA) are cleaved as a signal peptide. Residues 22–37 (EPNSSPNNPLIEEEAR) constitute a propeptide that is removed on maturation. Intrachain disulfides connect cysteine 39–cysteine 54, cysteine 46–cysteine 59, cysteine 53–cysteine 70, and cysteine 61–cysteine 68. The propeptide occupies 72–82 (KKFIEFFGGGK).

It belongs to the neurotoxin 02 (plectoxin) family. As to expression, expressed by the venom gland.

The protein resides in the secreted. Functionally, antagonist of L-type calcium channels (Cav1/CACNA1). Induces immediate clockwise gyration and flaccid paralysis after 6 hours at dose levels of 5 ug per mouse. The chain is Omega-ctenitoxin-Pn1a from Phoneutria nigriventer (Brazilian armed spider).